An 897-amino-acid polypeptide reads, in one-letter code: 3'-5' exonuclease DinG (897 aa).

The Exonuclease domain occupies 8–161; sequence VVDLETTGNQ…DEDAATTAKL (154 aa). The Helicase ATP-binding domain maps to 241 to 496; that stretch reads SKAVDQLGLT…KAIDQLEKQR (256 aa). An ATP-binding site is contributed by 276 to 283; sequence ASLGSGKS. A DEAH box motif is present at residues 448-451; that stretch reads DEAH. Residues 703-893 enclose the Helicase C-terminal domain; that stretch reads NIDEYVASIV…QFGKLLRQIQ (191 aa).

It belongs to the helicase family. DinG subfamily. Type 2 sub-subfamily. In terms of assembly, monomer in solution.

With respect to regulation, the nuclease activity is inhibited by ATP or ADP. In terms of biological role, 3'-5' exonuclease acting on single-stranded DNA (ssDNA) and RNA (ssRNA) substrates. Displays ssDNA-stimulated ATPase activity, but lacks helicase activity. In Staphylococcus aureus (strain MRSA252), this protein is 3'-5' exonuclease DinG.